The chain runs to 116 residues: Ig heavy chain V region 1B43 (116 aa).

A signal peptide spans Met1–Ser18. Positions Asp19–Thr48 are framework-1. A disulfide bridge connects residues Cys40 and Cys114. Residues Ser49–Trp53 are complementarity-determining-1. The tract at residues His54 to Met67 is framework-2. The complementarity-determining-2 stretch occupies residues Gly68–Ser84. A framework-3 region spans residues Arg85 to Arg116.

In Mus musculus (Mouse), this protein is Ig heavy chain V region 1B43.